A 235-amino-acid chain; its full sequence is NAD(P)H-quinone oxidoreductase subunit K (235 aa).

The [4Fe-4S] cluster site is built by cysteine 52, cysteine 53, cysteine 117, and cysteine 148. Low complexity predominate over residues 216-226; that stretch reads AGAAVAPQLPV. Positions 216–235 are disordered; it reads AGAAVAPQLPVTEKEGRDRA.

This sequence belongs to the complex I 20 kDa subunit family. In terms of assembly, NDH-1 can be composed of about 15 different subunits; different subcomplexes with different compositions have been identified which probably have different functions. Requires [4Fe-4S] cluster as cofactor.

The protein localises to the cellular thylakoid membrane. It carries out the reaction a plastoquinone + NADH + (n+1) H(+)(in) = a plastoquinol + NAD(+) + n H(+)(out). It catalyses the reaction a plastoquinone + NADPH + (n+1) H(+)(in) = a plastoquinol + NADP(+) + n H(+)(out). In terms of biological role, NDH-1 shuttles electrons from an unknown electron donor, via FMN and iron-sulfur (Fe-S) centers, to quinones in the respiratory and/or the photosynthetic chain. The immediate electron acceptor for the enzyme in this species is believed to be plastoquinone. Couples the redox reaction to proton translocation, and thus conserves the redox energy in a proton gradient. Cyanobacterial NDH-1 also plays a role in inorganic carbon-concentration. This is NAD(P)H-quinone oxidoreductase subunit K from Synechococcus elongatus (strain ATCC 33912 / PCC 7942 / FACHB-805) (Anacystis nidulans R2).